The sequence spans 109 residues: Large ribosomal subunit protein uL1 (109 aa).

The protein belongs to the universal ribosomal protein uL1 family. Part of the 50S ribosomal subunit.

Binds directly to 23S rRNA. The L1 stalk is quite mobile in the ribosome, and is involved in E site tRNA release. Its function is as follows. Protein L1 is also a translational repressor protein, it controls the translation of the L11 operon by binding to its mRNA. The protein is Large ribosomal subunit protein uL1 (rplA) of Aquifex pyrophilus.